A 426-amino-acid polypeptide reads, in one-letter code: Phosphoribosylamine--glycine ligase (426 aa).

The region spanning 107–313 is the ATP-grasp domain; it reads KDFMQKYGVK…FLNVINSALN (207 aa). 133–194 is a binding site for ATP; sequence LDKISYPVVI…EEFLDGVEIS (62 aa). 2 residues coordinate Mg(2+): glutamate 283 and asparagine 285.

The protein belongs to the GARS family. Mg(2+) is required as a cofactor. It depends on Mn(2+) as a cofactor.

The enzyme catalyses 5-phospho-beta-D-ribosylamine + glycine + ATP = N(1)-(5-phospho-beta-D-ribosyl)glycinamide + ADP + phosphate + H(+). It participates in purine metabolism; IMP biosynthesis via de novo pathway; N(1)-(5-phospho-D-ribosyl)glycinamide from 5-phospho-alpha-D-ribose 1-diphosphate: step 2/2. The chain is Phosphoribosylamine--glycine ligase from Fusobacterium nucleatum subsp. nucleatum (strain ATCC 25586 / DSM 15643 / BCRC 10681 / CIP 101130 / JCM 8532 / KCTC 2640 / LMG 13131 / VPI 4355).